The chain runs to 453 residues: Glutamate-rich protein 5 (453 aa).

Disordered stretches follow at residues 1–38, 66–377, and 394–453; these read MGCS…ALGR, NGVQ…EHPA, and TNEE…HSML. Positions 11 to 21 are enriched in basic and acidic residues; sequence AGDDNRLRSAT. Ser155 is subject to Phosphoserine. 2 stretches are compositionally biased toward polar residues: residues 230-243 and 271-283; these read LQET…SQPL and QETL…SQLR. Composition is skewed to basic and acidic residues over residues 305–332, 364–374, and 394–403; these read EEEK…EHGG, IQPERTVESME, and TNEEDQHIEG. A compositionally biased stretch (acidic residues) spans 404-413; sequence ETGETVETEM. Over residues 414–424 the composition is skewed to basic and acidic residues; it reads ESEKVSEGAET.

In Bos taurus (Bovine), this protein is Glutamate-rich protein 5 (ERICH5).